We begin with the raw amino-acid sequence, 182 residues long: Ribosome maturation factor RimM (182 aa).

Positions 106–179 (EGEFHVLDLI…RIEITPPPGL (74 aa)) constitute a PRC barrel domain.

The protein belongs to the RimM family. Binds ribosomal protein uS19.

Its subcellular location is the cytoplasm. Its function is as follows. An accessory protein needed during the final step in the assembly of 30S ribosomal subunit, possibly for assembly of the head region. Essential for efficient processing of 16S rRNA. May be needed both before and after RbfA during the maturation of 16S rRNA. It has affinity for free ribosomal 30S subunits but not for 70S ribosomes. In Synechococcus elongatus (strain ATCC 33912 / PCC 7942 / FACHB-805) (Anacystis nidulans R2), this protein is Ribosome maturation factor RimM.